Reading from the N-terminus, the 472-residue chain is MSSGTLYDKVWDLHRVAELPGGSTQLFVGLHLIHEVTSPQAFAALRDKGLSVRCPERTVATVDHIVPTTSQSRPFADSLAEEMLSTLERNCADHGITLNGIGSGRQGIVHVIAPELGLTQPGMTVACGDSHTSTHGAFGAIAFGIGTSQVRDVLASQSLAMSKLKVRRIQVNGRLSDGVSAKDLILHVIRTLGVKGGVGFAYEFAGPAVEALSMEERMTLCNMAIEGGARCGYVNPDQVTFDYLSGRAGAPSGAAWDRAVSWWRGLASDPDAVVDDEVVFDAASIAPTVTWGITPGQGLGIDECIPQLEQLEPGERPIAEEAYRYMDLQPGTAIAGVPVDVCFIGSCTNGRLSDLRAAAAVARGRHVADGIKAFVVPGSEQVAKAAEAEGLDRVFQDAGFEWREPGCSMCLAMNPDRLEGRQISASSSNRNFKGRQGSASGRTLLMSPAMVAAAAVHGQVTDVRTLSLQSAV.

Residues Cys347, Cys407, and Cys410 each contribute to the [4Fe-4S] cluster site.

It belongs to the aconitase/IPM isomerase family. LeuC type 1 subfamily. In terms of assembly, heterodimer of LeuC and LeuD. It depends on [4Fe-4S] cluster as a cofactor.

The enzyme catalyses (2R,3S)-3-isopropylmalate = (2S)-2-isopropylmalate. The protein operates within amino-acid biosynthesis; L-leucine biosynthesis; L-leucine from 3-methyl-2-oxobutanoate: step 2/4. Functionally, catalyzes the isomerization between 2-isopropylmalate and 3-isopropylmalate, via the formation of 2-isopropylmaleate. The chain is 3-isopropylmalate dehydratase large subunit from Parasynechococcus marenigrum (strain WH8102).